The sequence spans 291 residues: Undecaprenyl-diphosphatase 2 (291 aa).

Transmembrane regions (helical) follow at residues 39–59, 85–105, 118–138, 198–218, 231–251, and 262–282; these read PGAA…LIYF, ARMG…GLTL, ITAT…RMAA, AARY…VFEL, PTLF…AWFM, and FVWY…VGVL.

This sequence belongs to the UppP family.

It localises to the cell membrane. It catalyses the reaction di-trans,octa-cis-undecaprenyl diphosphate + H2O = di-trans,octa-cis-undecaprenyl phosphate + phosphate + H(+). Functionally, catalyzes the dephosphorylation of undecaprenyl diphosphate (UPP). Confers resistance to bacitracin. This chain is Undecaprenyl-diphosphatase 2, found in Streptomyces coelicolor (strain ATCC BAA-471 / A3(2) / M145).